The primary structure comprises 570 residues: Periplasmic trehalase (570 aa).

The N-terminal stretch at 1–34 is a signal peptide; it reads MIPPEIRRSVLLQKAIKLALAGTLLTFASFSATA. Residues arginine 159, 166–167, asparagine 203, 212–214, 284–286, and glycine 317 contribute to the substrate site; these read WD, RSQ, and RPE. Active-site proton donor/acceptor residues include aspartate 319 and glutamate 503. Glutamate 518 serves as a coordination point for substrate. The interval 544–570 is disordered; sequence KPCDSVPSTRPASLSATPTKTPSAATQ. A compositionally biased stretch (low complexity) spans 554–570; the sequence is PASLSATPTKTPSAATQ.

This sequence belongs to the glycosyl hydrolase 37 family. Monomer.

It is found in the periplasm. The catalysed reaction is alpha,alpha-trehalose + H2O = alpha-D-glucose + beta-D-glucose. Provides the cells with the ability to utilize trehalose at high osmolarity by splitting it into glucose molecules that can subsequently be taken up by the phosphotransferase-mediated uptake system. The protein is Periplasmic trehalase of Salmonella schwarzengrund (strain CVM19633).